Consider the following 477-residue polypeptide: Ectonucleotide pyrophosphatase/phosphodiesterase family member 5 (477 aa).

The N-terminal stretch at 1-24 (MTSKFLLVSFILAALSLSTTFSLQ) is a signal peptide. The Zn(2+) site is built by D36 and T72. T72 (nucleophile) is an active-site residue. 2 N-linked (GlcNAc...) asparagine glycosylation sites follow: N101 and N158. Residues D191, H195, D238, and H239 each coordinate Zn(2+). 2 N-linked (GlcNAc...) asparagine glycosylation sites follow: N292 and N329. Zn(2+) is bound at residue H339. N-linked (GlcNAc...) asparagine glycosylation is found at N362, N369, N382, and N389. A helical transmembrane segment spans residues 432–452 (PYFIGVSLGSIIVIVFFVIFI).

This sequence belongs to the nucleotide pyrophosphatase/phosphodiesterase family. Zn(2+) serves as cofactor. In terms of processing, N-glycosylated.

The protein resides in the secreted. Its subcellular location is the membrane. Its function is as follows. Can hydrolyze NAD but cannot hydrolyze nucleotide di- and triphosphates. Lacks lysopholipase D activity. May play a role in neuronal cell communication. The chain is Ectonucleotide pyrophosphatase/phosphodiesterase family member 5 from Homo sapiens (Human).